The following is a 222-amino-acid chain: 7-cyano-7-deazaguanine synthase (222 aa).

An ATP-binding site is contributed by 8 to 18; the sequence is LSGGLDSTTCL. 4 residues coordinate Zn(2+): C186, C194, C197, and C200.

The protein belongs to the QueC family. As to quaternary structure, homodimer. The cofactor is Zn(2+).

It carries out the reaction 7-carboxy-7-deazaguanine + NH4(+) + ATP = 7-cyano-7-deazaguanine + ADP + phosphate + H2O + H(+). The protein operates within purine metabolism; 7-cyano-7-deazaguanine biosynthesis. Functionally, catalyzes the ATP-dependent conversion of 7-carboxy-7-deazaguanine (CDG) to 7-cyano-7-deazaguanine (preQ(0)). The polypeptide is 7-cyano-7-deazaguanine synthase (Acetivibrio thermocellus (strain ATCC 27405 / DSM 1237 / JCM 9322 / NBRC 103400 / NCIMB 10682 / NRRL B-4536 / VPI 7372) (Clostridium thermocellum)).